Consider the following 62-residue polypeptide: uncharacterized protein (62 aa).

The disordered stretch occupies residues 1–62; the sequence is MSSTAEEMAA…SNGEAKRKEK (62 aa). The span at 28 to 37 shows a compositional bias: basic and acidic residues; it reads TKSDRVEHKH.

This is an uncharacterized protein from Caenorhabditis elegans.